We begin with the raw amino-acid sequence, 312 residues long: DNA-directed RNA polymerase subunit alpha (312 aa).

The alpha N-terminal domain (alpha-NTD) stretch occupies residues 1 to 226; it reads MIEFEKPNIT…EHLDLFTDLT (226 aa). The interval 244–312 is alpha C-terminal domain (alpha-CTD); the sequence is DHVLERTIEE…DLGLGLKNDK (69 aa).

It belongs to the RNA polymerase alpha chain family. As to quaternary structure, homodimer. The RNAP catalytic core consists of 2 alpha, 1 beta, 1 beta' and 1 omega subunit. When a sigma factor is associated with the core the holoenzyme is formed, which can initiate transcription.

The catalysed reaction is RNA(n) + a ribonucleoside 5'-triphosphate = RNA(n+1) + diphosphate. DNA-dependent RNA polymerase catalyzes the transcription of DNA into RNA using the four ribonucleoside triphosphates as substrates. This chain is DNA-directed RNA polymerase subunit alpha, found in Streptococcus gordonii (strain Challis / ATCC 35105 / BCRC 15272 / CH1 / DL1 / V288).